We begin with the raw amino-acid sequence, 79 residues long: Small ribosomal subunit protein bS18 (79 aa).

This sequence belongs to the bacterial ribosomal protein bS18 family. In terms of assembly, part of the 30S ribosomal subunit. Forms a tight heterodimer with protein bS6.

Its function is as follows. Binds as a heterodimer with protein bS6 to the central domain of the 16S rRNA, where it helps stabilize the platform of the 30S subunit. The protein is Small ribosomal subunit protein bS18 of Salinispora arenicola (strain CNS-205).